A 314-amino-acid polypeptide reads, in one-letter code: Mycothiol acetyltransferase (314 aa).

Glu39 contributes to the 1D-myo-inositol 2-(L-cysteinylamino)-2-deoxy-alpha-D-glucopyranoside binding site. 80–82 (LTA) contacts acetyl-CoA. The N-acetyltransferase domain maps to 159–313 (FVCRRFDPIS…PTGELGHEPP (155 aa)). Positions 186, 228, and 237 each coordinate 1D-myo-inositol 2-(L-cysteinylamino)-2-deoxy-alpha-D-glucopyranoside. Acetyl-CoA is bound by residues 241 to 243 (LGV) and 248 to 254 (QGQGVGR). Residue Tyr275 coordinates 1D-myo-inositol 2-(L-cysteinylamino)-2-deoxy-alpha-D-glucopyranoside.

This sequence belongs to the acetyltransferase family. MshD subfamily. In terms of assembly, monomer.

It catalyses the reaction 1D-myo-inositol 2-(L-cysteinylamino)-2-deoxy-alpha-D-glucopyranoside + acetyl-CoA = mycothiol + CoA + H(+). Its function is as follows. Catalyzes the transfer of acetyl from acetyl-CoA to desacetylmycothiol (Cys-GlcN-Ins) to form mycothiol. This Jonesia denitrificans (strain ATCC 14870 / DSM 20603 / BCRC 15368 / CIP 55.134 / JCM 11481 / NBRC 15587 / NCTC 10816 / Prevot 55134) (Listeria denitrificans) protein is Mycothiol acetyltransferase.